A 411-amino-acid chain; its full sequence is MADVVVGIQWGDEGKGKIVDRIAKDYDFVVRYQGGHNAGHTIVHKGVKHSLHLMPSGVLYPKCKNIISSAVVVSVKDLCEEISAFEDLENRLFISDRAHVILPYHAKKDAFKEKSQNIGTTKKGIGPCYEDKMARSGIRMGDLLDDKILEEKLNAHFKAIEPFKKAYDLGENYEKDLMGYFKTYAPKICPFIKDTTSMLIEANQKGEKILLEGAQGTLLDIDLGTYPFVTSSNTTSASACVSTGLNPKAINEVIGITKAYSTRVGNGPFPSEDTTPMGDHLRTKGVEFGTTTKRPRRCGWLDLVALKYACALNGCTQLALMKLDVLDGIDAIKVCVAYERKGERLEAFPSDLKDCTPIYQTFKGWEKSVGVRKLDDLEPNAREYIRFIEKEVGVKIGLISTSPEREDTIFL.

GTP is bound by residues Gly11–Lys17 and Gly39–Thr41. Asp12 serves as the catalytic Proton acceptor. Mg(2+)-binding residues include Asp12 and Gly39. Residues Asp12–Lys15, Asn37–His40, Thr121, Arg135, Gln215, Thr230, and Arg294 contribute to the IMP site. The active-site Proton donor is the His40. A substrate-binding site is contributed by Thr290 to Arg296. GTP-binding positions include Arg296, Lys322–Asp324, and Ser400–Ser402.

The protein belongs to the adenylosuccinate synthetase family. In terms of assembly, homodimer. Mg(2+) is required as a cofactor.

The protein localises to the cytoplasm. The enzyme catalyses IMP + L-aspartate + GTP = N(6)-(1,2-dicarboxyethyl)-AMP + GDP + phosphate + 2 H(+). It participates in purine metabolism; AMP biosynthesis via de novo pathway; AMP from IMP: step 1/2. Its function is as follows. Plays an important role in the de novo pathway of purine nucleotide biosynthesis. Catalyzes the first committed step in the biosynthesis of AMP from IMP. This Helicobacter pylori (strain J99 / ATCC 700824) (Campylobacter pylori J99) protein is Adenylosuccinate synthetase.